The sequence spans 251 residues: Octanoyltransferase (251 aa).

The region spanning 56 to 237 (ADTGDEIWVV…RLIANLDGES (182 aa)) is the BPL/LPL catalytic domain. Residues 96–103 (RGGQITYH), 168–170 (ALG), and 181–183 (GLS) contribute to the substrate site. Cys199 functions as the Acyl-thioester intermediate in the catalytic mechanism.

This sequence belongs to the LipB family.

Its subcellular location is the cytoplasm. It catalyses the reaction octanoyl-[ACP] + L-lysyl-[protein] = N(6)-octanoyl-L-lysyl-[protein] + holo-[ACP] + H(+). It functions in the pathway protein modification; protein lipoylation via endogenous pathway; protein N(6)-(lipoyl)lysine from octanoyl-[acyl-carrier-protein]: step 1/2. In terms of biological role, catalyzes the transfer of endogenously produced octanoic acid from octanoyl-acyl-carrier-protein onto the lipoyl domains of lipoate-dependent enzymes. Lipoyl-ACP can also act as a substrate although octanoyl-ACP is likely to be the physiological substrate. This Burkholderia ambifaria (strain MC40-6) protein is Octanoyltransferase.